The sequence spans 201 residues: Dephospho-CoA kinase (201 aa).

The DPCK domain maps to 4–201; it reads AFFVTASIAC…VIQEISKGNM (198 aa). 12–17 provides a ligand contact to ATP; that stretch reads ACGKST.

The protein belongs to the CoaE family.

It localises to the cytoplasm. It catalyses the reaction 3'-dephospho-CoA + ATP = ADP + CoA + H(+). Its pathway is cofactor biosynthesis; coenzyme A biosynthesis; CoA from (R)-pantothenate: step 5/5. Its function is as follows. Catalyzes the phosphorylation of the 3'-hydroxyl group of dephosphocoenzyme A to form coenzyme A. The polypeptide is Dephospho-CoA kinase (Campylobacter jejuni subsp. jejuni serotype O:2 (strain ATCC 700819 / NCTC 11168)).